Here is a 378-residue protein sequence, read N- to C-terminus: Probable pectin lyase A (378 aa).

Residues 1-18 (MKYASFLALVGFITSTSA) form the signal peptide. Cystine bridges form between Cys81–Cys100 and Cys90–Cys224. Arg254 is a catalytic residue. A disulfide bridge connects residues Cys321 and Cys329.

Belongs to the polysaccharide lyase 1 family.

The protein localises to the secreted. The catalysed reaction is Eliminative cleavage of (1-&gt;4)-alpha-D-galacturonan methyl ester to give oligosaccharides with 4-deoxy-6-O-methyl-alpha-D-galact-4-enuronosyl groups at their non-reducing ends.. Pectinolytic enzymes consist of four classes of enzymes: pectin lyase, polygalacturonase, pectin methylesterase and rhamnogalacturonase. Among pectinolytic enzymes, pectin lyase is the most important in depolymerization of pectin, since it cleaves internal glycosidic bonds of highly methylated pectins. The protein is Probable pectin lyase A (pelA) of Aspergillus clavatus (strain ATCC 1007 / CBS 513.65 / DSM 816 / NCTC 3887 / NRRL 1 / QM 1276 / 107).